Consider the following 416-residue polypeptide: N-carbamoyl-L-amino-acid amidohydrolase (416 aa).

A divalent metal cation-binding residues include H87, D98, E133, and H194. An N-carbamoyl-L-alpha-amino acid-binding residues include Q197, H230, N279, R292, and G361. An involved in dimerization region spans residues 213–331 (HCQGLWWLEF…SIEAVGHFDP (119 aa)). H386 is a binding site for a divalent metal cation.

It belongs to the peptidase M20 family. As to quaternary structure, homodimer. It depends on Mn(2+) as a cofactor. Ni(2+) serves as cofactor. Requires Co(2+) as cofactor. Fe(2+) is required as a cofactor.

The enzyme catalyses an N-carbamoyl-L-alpha-amino acid + H2O + 2 H(+) = an L-alpha-amino acid + NH4(+) + CO2. It carries out the reaction N-carbamoyl-L-methionine + H2O + 2 H(+) = L-methionine + NH4(+) + CO2. The catalysed reaction is N-acetyl-L-methionine + H2O = L-methionine + acetate. It catalyses the reaction N(alpha)-formyl-L-methionine + H2O = formate + L-methionine. The enzyme catalyses N-carbamoyl-L-alanine + H2O + 2 H(+) = L-alanine + NH4(+) + CO2. It carries out the reaction N-carbamoyl-L-cysteine + H2O + 2 H(+) = L-cysteine + NH4(+) + CO2. The catalysed reaction is N-carbamoyl-L-tryptophan + H2O + 2 H(+) = L-tryptophan + NH4(+) + CO2. It catalyses the reaction N-carbamoyl-L-valine + H2O + 2 H(+) = L-valine + NH4(+) + CO2. The enzyme catalyses N-carbamoyl-L-phenylalanine + H2O + 2 H(+) = L-phenylalanine + NH4(+) + CO2. Strongly inhibited by Hg(2+), Cu(2+), Zn(2+), Pb(2+) and Fe(3+) ions, and slightly inhibited by Na(+) and K(+) ions. Beta-mercaptoethanol and 5,5'-dithiobis-(2-nitrobenzoic acid)(DTNB) cause 34% and 42% inhibition, respectively. Catalyzes the hydrolysis of both aliphatic and aromatic N-carbamoyl-L-alpha-amino acids to free L-alpha-amino acids. Is strictly L-specific since it is inactive toward N-carbamoyl-D-alpha-amino acids. Is also able to hydrolyze N-formyl-L-methionine and N-acetyl-L-methionine, but not ureidosuccinate or 3-ureidopropanoate. The sequence is that of N-carbamoyl-L-amino-acid amidohydrolase from Rhizobium meliloti (Ensifer meliloti).